A 139-amino-acid chain; its full sequence is Putative pre-16S rRNA nuclease (139 aa).

Belongs to the YqgF nuclease family.

The protein localises to the cytoplasm. Could be a nuclease involved in processing of the 5'-end of pre-16S rRNA. The chain is Putative pre-16S rRNA nuclease from Streptococcus pneumoniae serotype 19F (strain G54).